Reading from the N-terminus, the 240-residue chain is MVELDPNNIPQHVAIIMDGNGRWAQQKGKMRIFGHKNGVKAVREAVSYARKVGIKVLTLYAFSSENWNRPKKEVNALMALFMQALDLEVKKLHKNNIKLNILGDVTGFSASLQNKIHQAEKLTENNTALTLNIAANYGGCWDIVQATKSLAQQVKEGKLAVDEINAQVLQQALVTKEQPQVDLLIRTSGEQRISNFLLWQIAYAELYFSDVLWPDFNEKEFNEAIIAYQQRHRRFGGAEE.

The active site involves D18. D18 lines the Mg(2+) pocket. Residues 19 to 22 (GNGR), W23, R31, H35, and 63 to 65 (SSE) each bind substrate. Catalysis depends on N66, which acts as the Proton acceptor. Residues W67, R69, R186, and 192-194 (RIS) contribute to the substrate site. Residue E205 participates in Mg(2+) binding.

Belongs to the UPP synthase family. Homodimer. The cofactor is Mg(2+).

The catalysed reaction is 8 isopentenyl diphosphate + (2E,6E)-farnesyl diphosphate = di-trans,octa-cis-undecaprenyl diphosphate + 8 diphosphate. In terms of biological role, catalyzes the sequential condensation of isopentenyl diphosphate (IPP) with (2E,6E)-farnesyl diphosphate (E,E-FPP) to yield (2Z,6Z,10Z,14Z,18Z,22Z,26Z,30Z,34E,38E)-undecaprenyl diphosphate (di-trans,octa-cis-UPP). UPP is the precursor of glycosyl carrier lipid in the biosynthesis of bacterial cell wall polysaccharide components such as peptidoglycan and lipopolysaccharide. The sequence is that of Ditrans,polycis-undecaprenyl-diphosphate synthase ((2E,6E)-farnesyl-diphosphate specific) from Pasteurella multocida (strain Pm70).